The primary structure comprises 144 residues: MAKKKIEAIIKLQVAAGKANPSPPIGPALGQHGVNIMGFCKEFNAKTQGMEPGMPIPVEISVYSDRSFTFEMKTPPASYLIKKAINVKSGSSKPSKEFVGTITRAQLEEIAKVKDPDLTAADLDAAVRIIAGSARSMGVKVEGV.

It belongs to the universal ribosomal protein uL11 family. In terms of assembly, part of the ribosomal stalk of the 50S ribosomal subunit. Interacts with L10 and the large rRNA to form the base of the stalk. L10 forms an elongated spine to which L12 dimers bind in a sequential fashion forming a multimeric L10(L12)X complex. One or more lysine residues are methylated.

In terms of biological role, forms part of the ribosomal stalk which helps the ribosome interact with GTP-bound translation factors. This Francisella tularensis subsp. mediasiatica (strain FSC147) protein is Large ribosomal subunit protein uL11.